An 814-amino-acid polypeptide reads, in one-letter code: Rho GTPase-activating protein 26 (814 aa).

One can recognise a BAR domain in the interval 7 to 262 (EFSDCCLDSP…MKENPLEHKT (256 aa)). The 105-residue stretch at 265 to 369 (PYTMEGYLYV…WMEAMDGREP (105 aa)) folds into the PH domain. The 186-residue stretch at 383–568 (AQLDSIGFSI…ILIENHEKIF (186 aa)) folds into the Rho-GAP domain. Disordered regions lie at residues 584 to 618 (SRKKSSDSKPPSCSKRPLTLFHAVPSTEKQEQRNS) and 638 to 696 (SSSL…SSDS). 2 stretches are compositionally biased toward low complexity: residues 591 to 600 (SKPPSCSKRP) and 638 to 661 (SSSLQPNLNSSDSNLDVVKPSRPS). Pro residues predominate over residues 662 to 672 (SLPPNPSPTSP). The residue at position 668 (S668) is a Phosphoserine. Phosphothreonine is present on T670. The residue at position 671 (S671) is a Phosphoserine. A compositionally biased stretch (low complexity) spans 673 to 696 (LSPSWPMFSAPSSPMPTSSTSSDS). One can recognise an SH3 domain in the interval 756 to 814 (TPFRKAKALYACQAEHDSELSFTAGTVFDNVHPSQEPGWLEGTLNGKTGLIPENYVEFL).

Interacts with NYAP1, NYAP2 and MYO16. Interacts with MICAL1 and WDR44. Binds to the C-terminus of PTK2/FAK1. Post-translationally, phosphorylated in a PINK1-dependent fashion promoting retrograde mitochondrial trafficking and clustering.

Its subcellular location is the cell junction. It localises to the focal adhesion. It is found in the cytoplasm. The protein resides in the cytoskeleton. The protein localises to the endosome membrane. Functionally, GTPase-activating protein for RHOA and CDC42. Facilitates mitochondrial quality control by promoting Parkin-mediated recruitment of autophagosomes to damaged mitochondria. Associates with MICAL1 on the endosomal membrane to promote Rab8-Rab10-dependent tubule extension. After dissociation of MICAL1, recruits WDR44 which connects the endoplasmic reticulum (ER) with the endosomal tubule, thereby participating in the export of a subset of neosynthesized proteins. The chain is Rho GTPase-activating protein 26 (Arhgap26) from Mus musculus (Mouse).